The following is a 1188-amino-acid chain: Oxysterol-binding protein homolog 1 (1188 aa).

ANK repeat units lie at residues valine 51–asparagine 80, asparagine 96–cysteine 125, and threonine 196–lysine 225. The region spanning methionine 330–arginine 379 is the PH domain. At serine 394 the chain carries Phosphoserine. 2 disordered regions span residues alanine 415–aspartate 546 and glutamine 661–threonine 692. Residues proline 424–glutamine 433 show a composition bias toward polar residues. Over residues threonine 443–asparagine 462 the composition is skewed to low complexity. Residues asparagine 463–glutamate 473 show a composition bias toward acidic residues. Serine 490 and serine 500 each carry phosphoserine. The span at proline 514 to glycine 529 shows a compositional bias: acidic residues. A phosphoserine mark is found at serine 678, serine 683, and serine 691. Residues threonine 692 and threonine 694 each carry the phosphothreonine modification. 2 positions are modified to phosphoserine: serine 708 and serine 712. The short motif at glutamate 716–glutamate 722 is the FFAT element. Residues glutamate 721–glutamate 755 form a disordered region. Positions leucine 800–asparagine 1174 are OSBP-related domain (ORD). Residues aspartate 834 and lysine 962 each coordinate ergosterol.

This sequence belongs to the OSBP family. In terms of assembly, interacts with NVJ1. Interacts with the AAA ATPase AFG2; regulates OSH1 membrane association. AFG2 is required for membrane dissociation of OSH1. Interacts with SCS2.

Its subcellular location is the golgi apparatus membrane. The protein resides in the nucleus outer membrane. The protein localises to the endoplasmic reticulum membrane. It is found in the vacuole membrane. In terms of biological role, lipid transport protein (LTP) involved in non-vesicular transfer of lipids between membranes. Functions in phosphoinositide-coupled directional transport of various lipids by carrying the lipid molecule in a hydrophobic pocket and transferring it between membranes through the cytosol. Involved in maintenance of intracellular sterol distribution and homeostasis. Involved in non-vesicular transport of ergosterol and PI(4)P at the NVJ. Binds sterol and PI4P in a mutually exclusive manner. May be involved in formation of PMN vesicles by altering the membrane lipid composition. The protein is Oxysterol-binding protein homolog 1 of Saccharomyces cerevisiae (strain ATCC 204508 / S288c) (Baker's yeast).